Here is a 299-residue protein sequence, read N- to C-terminus: Nucleotide-binding protein Moth_0258 (299 aa).

14–21 (GLSGAGKT) contributes to the ATP binding site. Residue 68 to 71 (DIRG) participates in GTP binding.

Belongs to the RapZ-like family.

Displays ATPase and GTPase activities. The sequence is that of Nucleotide-binding protein Moth_0258 from Moorella thermoacetica (strain ATCC 39073 / JCM 9320).